Reading from the N-terminus, the 365-residue chain is Chorismate synthase (365 aa).

Arg-46 serves as a coordination point for NADP(+). FMN-binding positions include 123 to 125, 241 to 242, Gly-281, 296 to 300, and Arg-322; these read RSS, NG, and KPTPS.

Belongs to the chorismate synthase family. In terms of assembly, homotetramer. Requires FMNH2 as cofactor.

The enzyme catalyses 5-O-(1-carboxyvinyl)-3-phosphoshikimate = chorismate + phosphate. It participates in metabolic intermediate biosynthesis; chorismate biosynthesis; chorismate from D-erythrose 4-phosphate and phosphoenolpyruvate: step 7/7. Functionally, catalyzes the anti-1,4-elimination of the C-3 phosphate and the C-6 proR hydrogen from 5-enolpyruvylshikimate-3-phosphate (EPSP) to yield chorismate, which is the branch point compound that serves as the starting substrate for the three terminal pathways of aromatic amino acid biosynthesis. This reaction introduces a second double bond into the aromatic ring system. This Helicobacter pylori (strain HPAG1) protein is Chorismate synthase.